A 1001-amino-acid chain; its full sequence is MTELDNFSMLEASKQVPDRKESSQILADHMSGRLLQKRLELVEDLWETVVRSECPLEQVERLLRLKQLSNSSGIVGEEQTNQINEIVELIKEMDLAEAISAARAFSLYFQLVNILEQRIEEDSYLESISRGQEEKINTSIDPFAPPLASQTAPATFSELFDRLRRLNVPPGQLEELLREMDIRLVFTAHPTEIVRHTVRHKQRRVASLLQQLQSDEVFSLSERDNLRLQLEEEIRLWWRTDELHQFKPTVLDEVDYALHYFQQVLFDAMPQLRRRICSALSQSYPDIDVPQEAFCTFGSWVGSDRDGNPSVTPEITWRTACYQRKLMLDRYMHSVQELRNQLSISMQWSQVSTQLLESLEMDRVRFPHIYEERAARYRLEPYRLKLSYTLERLKFTQQRNQELSEAGWATTIERTNVSNNPDEDLHYCSIDEFRRDLELIRNSLVATNLSCEQLDTLLTQVHIFAFSLASLDIRQESTRHSEAIDELTRYLNLPKSYIEMTEDEKVIWLMDELQTLRPLIPSAVQWSKSTEETFAVFRMLDRLQKEFGSRICRSYVISMSHTVSDLLEVLLLAKEYGLVDISSESSDLLVIPLFETVEDLQHAPSVMEELFQSEIYLKLLPRVGEKSQPLQELMLGYSDSNKDSGFLSSNWEIHQAQIALQNLASSHGVALRLFHGRGGSVGRGGGPAYQAILAQPSGTLKGRIKITEQGEVLASKYSLPELALYNLETVTTAVLQNSLVTNQWDATPSWNELMTRLAVRSRQHYRALVHDNPDLVAFFQEVTPIEEISKLQISSRPARRKTGAKDLSSLRAIPWVFGWTQSRFLLPSWFGVGTALEEELKSDPDHIELLRMLNQRWPFFRMLISKVEMTLSKVDLEVAYHYMTSLGSHENREAFNCIFEIISNEYKLTRRLVLEITGKPKLLSADPALQLSVDLRNRTIVPLGFLQVALLCRLRDQNRQPPMSETLLTEGDIGRTYSRSELLRGALLTINGIAAGMRNTG.

Catalysis depends on residues His189 and Lys642.

It belongs to the PEPCase type 1 family. It depends on Mg(2+) as a cofactor.

The catalysed reaction is oxaloacetate + phosphate = phosphoenolpyruvate + hydrogencarbonate. In terms of biological role, forms oxaloacetate, a four-carbon dicarboxylic acid source for the tricarboxylic acid cycle. This is Phosphoenolpyruvate carboxylase from Prochlorococcus marinus (strain SARG / CCMP1375 / SS120).